Consider the following 665-residue polypeptide: Long chain acyl-CoA synthetase 2 (665 aa).

Residue 228 to 239 (IMYTSGTTGEPK) coordinates ATP. The tract at residues 496–520 (DGWFHTGDIGEWQEDGSMKIIDRKK) is fatty acid-binding.

It belongs to the ATP-dependent AMP-binding enzyme family. It depends on Mg(2+) as a cofactor. In terms of tissue distribution, expressed along the entire length of the stem, but expression was not entirely epidermal specific, with some expression found in internal cell layers as well. Was expressed in leave epidermal cells, flowers (sepals, petals, stamens, filaments and carpel), siliques and developing seeds. In roots, expression was detected in an internal cell layer, probably the endodermal layer.

It is found in the endoplasmic reticulum. The enzyme catalyses a long-chain fatty acid + ATP + CoA = a long-chain fatty acyl-CoA + AMP + diphosphate. Its pathway is lipid metabolism; fatty acid metabolism. In terms of biological role, activation of long-chain fatty acids for both synthesis of cellular lipids, and degradation via beta-oxidation. Acts in the cutin pathway. Preferentially uses palmitate, palmitoleate, oleate and linoleate. Required for repression of lateral root formation through its role in cutin biosynthesis and subsequent aerial tissues permeability. The sequence is that of Long chain acyl-CoA synthetase 2 (LACS2) from Arabidopsis thaliana (Mouse-ear cress).